A 236-amino-acid polypeptide reads, in one-letter code: 2,3,4,5-tetrahydropyridine-2,6-dicarboxylate N-acetyltransferase (236 aa).

It belongs to the transferase hexapeptide repeat family. DapH subfamily.

It carries out the reaction (S)-2,3,4,5-tetrahydrodipicolinate + acetyl-CoA + H2O = L-2-acetamido-6-oxoheptanedioate + CoA. It functions in the pathway amino-acid biosynthesis; L-lysine biosynthesis via DAP pathway; LL-2,6-diaminopimelate from (S)-tetrahydrodipicolinate (acetylase route): step 1/3. Its function is as follows. Catalyzes the transfer of an acetyl group from acetyl-CoA to tetrahydrodipicolinate. The chain is 2,3,4,5-tetrahydropyridine-2,6-dicarboxylate N-acetyltransferase from Clostridium botulinum (strain Alaska E43 / Type E3).